Reading from the N-terminus, the 413-residue chain is Arginine biosynthesis bifunctional protein ArgJ (413 aa).

The substrate site is built by Thr-160, Lys-186, Thr-197, Glu-284, Asn-408, and Ser-413. The active-site Nucleophile is Thr-197.

Belongs to the ArgJ family. In terms of assembly, heterotetramer of two alpha and two beta chains.

The protein localises to the cytoplasm. It carries out the reaction N(2)-acetyl-L-ornithine + L-glutamate = N-acetyl-L-glutamate + L-ornithine. The catalysed reaction is L-glutamate + acetyl-CoA = N-acetyl-L-glutamate + CoA + H(+). It participates in amino-acid biosynthesis; L-arginine biosynthesis; L-ornithine and N-acetyl-L-glutamate from L-glutamate and N(2)-acetyl-L-ornithine (cyclic): step 1/1. It functions in the pathway amino-acid biosynthesis; L-arginine biosynthesis; N(2)-acetyl-L-ornithine from L-glutamate: step 1/4. In terms of biological role, catalyzes two activities which are involved in the cyclic version of arginine biosynthesis: the synthesis of N-acetylglutamate from glutamate and acetyl-CoA as the acetyl donor, and of ornithine by transacetylation between N(2)-acetylornithine and glutamate. This is Arginine biosynthesis bifunctional protein ArgJ from Burkholderia pseudomallei (strain K96243).